Consider the following 391-residue polypeptide: Tryptophan synthase beta chain (391 aa).

N6-(pyridoxal phosphate)lysine is present on K84.

This sequence belongs to the TrpB family. As to quaternary structure, tetramer of two alpha and two beta chains. Pyridoxal 5'-phosphate serves as cofactor.

The enzyme catalyses (1S,2R)-1-C-(indol-3-yl)glycerol 3-phosphate + L-serine = D-glyceraldehyde 3-phosphate + L-tryptophan + H2O. It participates in amino-acid biosynthesis; L-tryptophan biosynthesis; L-tryptophan from chorismate: step 5/5. The beta subunit is responsible for the synthesis of L-tryptophan from indole and L-serine. In Thermoanaerobacter pseudethanolicus (strain ATCC 33223 / 39E) (Clostridium thermohydrosulfuricum), this protein is Tryptophan synthase beta chain.